The primary structure comprises 432 residues: Enolase (432 aa).

Position 163 (Q163) interacts with (2R)-2-phosphoglycerate. The Proton donor role is filled by E205. 3 residues coordinate Mg(2+): D242, E285, and D312. (2R)-2-phosphoglycerate is bound by residues K337, R366, S367, and K388. The Proton acceptor role is filled by K337.

It belongs to the enolase family. The cofactor is Mg(2+).

The protein localises to the cytoplasm. It is found in the secreted. It localises to the cell surface. The enzyme catalyses (2R)-2-phosphoglycerate = phosphoenolpyruvate + H2O. It functions in the pathway carbohydrate degradation; glycolysis; pyruvate from D-glyceraldehyde 3-phosphate: step 4/5. Functionally, catalyzes the reversible conversion of 2-phosphoglycerate (2-PG) into phosphoenolpyruvate (PEP). It is essential for the degradation of carbohydrates via glycolysis. This is Enolase from Bifidobacterium longum (strain DJO10A).